A 214-amino-acid chain; its full sequence is Protein PsaE (214 aa).

An N-terminal signal peptide occupies residues 1 to 24; the sequence is MSHCVVLNKLESVLIIGDSRYALS. Positions 1 to 94 form a DNA-binding region, ompR/PhoB-type; it reads MSHCVVLNKL…YKNEGYSYQK (94 aa).

Its function is as follows. Required for expression of pH 6 antigen. The protein is Protein PsaE (psaE) of Yersinia pseudotuberculosis serotype I (strain IP32953).